We begin with the raw amino-acid sequence, 287 residues long: Inorganic pyrophosphatase (287 aa).

Phosphothreonine is present on Thr-65. Arg-79 lines the diphosphate pocket. The Proton donor role is filled by Tyr-90. Positions 116, 121, and 153 each coordinate Mg(2+). Lys-239 is covalently cross-linked (Glycyl lysine isopeptide (Lys-Gly) (interchain with G-Cter in ubiquitin)). At Thr-251 the chain carries Phosphothreonine. A Phosphoserine modification is found at Ser-266. Lys-279 participates in a covalent cross-link: Glycyl lysine isopeptide (Lys-Gly) (interchain with G-Cter in ubiquitin). Ser-286 carries the phosphoserine modification.

This sequence belongs to the PPase family. In terms of assembly, homodimer. Mg(2+) serves as cofactor.

The protein resides in the cytoplasm. The catalysed reaction is diphosphate + H2O = 2 phosphate + H(+). This chain is Inorganic pyrophosphatase (IPP1), found in Saccharomyces cerevisiae (strain ATCC 204508 / S288c) (Baker's yeast).